Reading from the N-terminus, the 91-residue chain is MPRSLKKGPFIDLHLLKKVEVAVEKNDRKPVKTWSRRSMILPQMVGLTIAVHNGRQHVPVLVNEDMVGHKLGEFAGTRTYRGHVADKKAKR.

The protein belongs to the universal ribosomal protein uS19 family.

Functionally, protein S19 forms a complex with S13 that binds strongly to the 16S ribosomal RNA. The polypeptide is Small ribosomal subunit protein uS19 (Pseudomonas putida (strain ATCC 700007 / DSM 6899 / JCM 31910 / BCRC 17059 / LMG 24140 / F1)).